A 216-amino-acid chain; its full sequence is Imidazoleglycerol-phosphate dehydratase (216 aa).

Serine 211 is subject to Phosphoserine.

This sequence belongs to the imidazoleglycerol-phosphate dehydratase family.

The enzyme catalyses D-erythro-1-(imidazol-4-yl)glycerol 3-phosphate = 3-(imidazol-4-yl)-2-oxopropyl phosphate + H2O. It participates in amino-acid biosynthesis; L-histidine biosynthesis; L-histidine from 5-phospho-alpha-D-ribose 1-diphosphate: step 6/9. In Schizosaccharomyces pombe (strain 972 / ATCC 24843) (Fission yeast), this protein is Imidazoleglycerol-phosphate dehydratase (his5).